We begin with the raw amino-acid sequence, 341 residues long: Hydrogenase expression/formation protein HupE (341 aa).

The protein belongs to the HypE family.

Its function is as follows. May be involved in the maturation of the NifE hydrogenase. This is Hydrogenase expression/formation protein HupE (hupE) from Azotobacter chroococcum mcd 1.